The sequence spans 61 residues: Large ribosomal subunit protein uL30 (61 aa).

It belongs to the universal ribosomal protein uL30 family. Part of the 50S ribosomal subunit.

The chain is Large ribosomal subunit protein uL30 from Nitrosomonas europaea (strain ATCC 19718 / CIP 103999 / KCTC 2705 / NBRC 14298).